Consider the following 341-residue polypeptide: MTLQDYIERATNGVDLSHETSRKAAKLLFEDATEAQIGALLTALRAKGETETEIAGFARGMRDAARTITPDRTPLVDTCGTGGDDYDTINISTTSAIVAAGAGAAVAKHGNYSVSSLSGSADVLSVAGADVKAEPPAVEAAIERDGIGFMLAPVFHPAMKAVIGPRKELGMRTIFNILGPLTNPAGADAQVIGVYDPDLVPVLGRALTQLPVERALVVHGSGMDEIALHDTTTVAEVIGDNVDGYTLSASSIGLDSAPVEAVAGGTPEENAADLRGIVTGETTGPKRDIILANAGAAIYVAGLADDIETGVEQAATAIDTGDAKATFETLCEPNSASTEQK.

5-phospho-alpha-D-ribose 1-diphosphate is bound by residues G80, 83-84, T88, 90-93, 108-116, and S120; these read GD, NIST, and KHGNYSVSS. An anthranilate-binding site is contributed by G80. S92 is a Mg(2+) binding site. Residue N111 coordinates anthranilate. R166 is an anthranilate binding site. Mg(2+)-binding residues include D224 and E225.

It belongs to the anthranilate phosphoribosyltransferase family. Homodimer. The cofactor is Mg(2+).

It catalyses the reaction N-(5-phospho-beta-D-ribosyl)anthranilate + diphosphate = 5-phospho-alpha-D-ribose 1-diphosphate + anthranilate. It functions in the pathway amino-acid biosynthesis; L-tryptophan biosynthesis; L-tryptophan from chorismate: step 2/5. Its function is as follows. Catalyzes the transfer of the phosphoribosyl group of 5-phosphorylribose-1-pyrophosphate (PRPP) to anthranilate to yield N-(5'-phosphoribosyl)-anthranilate (PRA). The chain is Anthranilate phosphoribosyltransferase from Haloquadratum walsbyi (strain DSM 16790 / HBSQ001).